The primary structure comprises 103 residues: Pyrimidine/purine nucleoside phosphorylase (103 aa).

This sequence belongs to the nucleoside phosphorylase PpnP family.

The catalysed reaction is a purine D-ribonucleoside + phosphate = a purine nucleobase + alpha-D-ribose 1-phosphate. It catalyses the reaction adenosine + phosphate = alpha-D-ribose 1-phosphate + adenine. The enzyme catalyses cytidine + phosphate = cytosine + alpha-D-ribose 1-phosphate. It carries out the reaction guanosine + phosphate = alpha-D-ribose 1-phosphate + guanine. The catalysed reaction is inosine + phosphate = alpha-D-ribose 1-phosphate + hypoxanthine. It catalyses the reaction thymidine + phosphate = 2-deoxy-alpha-D-ribose 1-phosphate + thymine. The enzyme catalyses uridine + phosphate = alpha-D-ribose 1-phosphate + uracil. It carries out the reaction xanthosine + phosphate = alpha-D-ribose 1-phosphate + xanthine. Its function is as follows. Catalyzes the phosphorolysis of diverse nucleosides, yielding D-ribose 1-phosphate and the respective free bases. Can use uridine, adenosine, guanosine, cytidine, thymidine, inosine and xanthosine as substrates. Also catalyzes the reverse reactions. This chain is Pyrimidine/purine nucleoside phosphorylase, found in Dechloromonas aromatica (strain RCB).